An 882-amino-acid polypeptide reads, in one-letter code: Cutinase transcription factor 1 beta (882 aa).

A compositionally biased stretch (low complexity) spans 1 to 20 (MNAETPEGSAAPPSPASTSA). Residues 1-49 (MNAETPEGSAAPPSPASTSAKTVTDKTNKKRASPSGDSEQPTKVTKRRA) form a disordered region. Residues 53 to 81 (CVSCRARKVRCDVVEGAPCGNCRWDNVEC) constitute a DNA-binding region (zn(2)-C6 fungal-type). The tract at residues 117-148 (NPMGMSTADLRRPSSGSAISTSSIDGPSSFLS) is disordered. Over residues 130–139 (SSGSAISTSS) the composition is skewed to low complexity.

Its subcellular location is the nucleus. This is Cutinase transcription factor 1 beta (CTF1-BETA) from Fusarium vanettenii (Neocosmospora pisi).